The following is a 422-amino-acid chain: Bifunctional enzyme IspD/IspF (422 aa).

Positions 1–267 (MAVGLLLLAA…PISALSMPLP (267 aa)) are 2-C-methyl-D-erythritol 4-phosphate cytidylyltransferase. A 2-C-methyl-D-erythritol 2,4-cyclodiphosphate synthase region spans residues 268–422 (LIGVGIDFHK…AIAVAQIYHR (155 aa)). A divalent metal cation contacts are provided by Asp274 and His276. Residues 274–276 (DFH) and 301–302 (HS) contribute to the 4-CDP-2-C-methyl-D-erythritol 2-phosphate site. Residue His309 coordinates a divalent metal cation. Residues 323–325 (DIG), Phe404, and Arg407 each bind 4-CDP-2-C-methyl-D-erythritol 2-phosphate.

This sequence in the N-terminal section; belongs to the IspD/TarI cytidylyltransferase family. IspD subfamily. The protein in the C-terminal section; belongs to the IspF family. A divalent metal cation serves as cofactor.

It catalyses the reaction 2-C-methyl-D-erythritol 4-phosphate + CTP + H(+) = 4-CDP-2-C-methyl-D-erythritol + diphosphate. The catalysed reaction is 4-CDP-2-C-methyl-D-erythritol 2-phosphate = 2-C-methyl-D-erythritol 2,4-cyclic diphosphate + CMP. The protein operates within isoprenoid biosynthesis; isopentenyl diphosphate biosynthesis via DXP pathway; isopentenyl diphosphate from 1-deoxy-D-xylulose 5-phosphate: step 2/6. It functions in the pathway isoprenoid biosynthesis; isopentenyl diphosphate biosynthesis via DXP pathway; isopentenyl diphosphate from 1-deoxy-D-xylulose 5-phosphate: step 4/6. Bifunctional enzyme that catalyzes the formation of 4-diphosphocytidyl-2-C-methyl-D-erythritol from CTP and 2-C-methyl-D-erythritol 4-phosphate (MEP) (IspD), and catalyzes the conversion of 4-diphosphocytidyl-2-C-methyl-D-erythritol 2-phosphate (CDP-ME2P) to 2-C-methyl-D-erythritol 2,4-cyclodiphosphate (ME-CPP) with a corresponding release of cytidine 5-monophosphate (CMP) (IspF). The chain is Bifunctional enzyme IspD/IspF from Tropheryma whipplei (strain TW08/27) (Whipple's bacillus).